The following is a 115-amino-acid chain: NADH-ubiquinone oxidoreductase chain 3 (115 aa).

3 helical membrane-spanning segments follow: residues 4–24 (FIVL…AFWL), 55–75 (FFLV…LLPL), and 87–107 (TMLT…YEWL).

It belongs to the complex I subunit 3 family. In terms of assembly, core subunit of respiratory chain NADH dehydrogenase (Complex I) which is composed of 45 different subunits. Interacts with TMEM186. Interacts with TMEM242.

The protein localises to the mitochondrion inner membrane. The catalysed reaction is a ubiquinone + NADH + 5 H(+)(in) = a ubiquinol + NAD(+) + 4 H(+)(out). In terms of biological role, core subunit of the mitochondrial membrane respiratory chain NADH dehydrogenase (Complex I) which catalyzes electron transfer from NADH through the respiratory chain, using ubiquinone as an electron acceptor. Essential for the catalytic activity of complex I. This is NADH-ubiquinone oxidoreductase chain 3 from Reithrodontomys megalotis (Western harvest mouse).